Consider the following 367-residue polypeptide: 2-aminoethylphosphonate--pyruvate transaminase (367 aa).

Pyridoxal 5'-phosphate is bound by residues 65-67 (SGS), Tyr92, Thr143, and Asp168. Lys194 carries the post-translational modification N6-(pyridoxal phosphate)lysine. Thr243 contacts pyridoxal 5'-phosphate.

This sequence belongs to the class-V pyridoxal-phosphate-dependent aminotransferase family. PhnW subfamily. In terms of assembly, homodimer. It depends on pyridoxal 5'-phosphate as a cofactor.

It catalyses the reaction (2-aminoethyl)phosphonate + pyruvate = phosphonoacetaldehyde + L-alanine. Its function is as follows. Involved in phosphonate degradation. In Salmonella typhimurium (strain LT2 / SGSC1412 / ATCC 700720), this protein is 2-aminoethylphosphonate--pyruvate transaminase (phnW).